Consider the following 747-residue polypeptide: RNA polymerase II assembly factor rtp1 (747 aa).

HEAT repeat units follow at residues 37–75, 103–141, 320–358, 381–418, 459–485, 486–523, and 557–594; these read NYFL…LLGV, QIYN…NCHE, DIIR…VCGT, SQLA…NVDS, EENE…LDLE, NPIS…SKDD, and INPV…KYDD.

The protein belongs to the Tango6 family. Interacts with RNA polymerase II subunits. Interacts with nuclear pore complex subunits.

The protein localises to the cytoplasm. Its subcellular location is the nucleus. In terms of biological role, required for the cytoplasmic assembly and the nuclear import of RNA polymerase II. This chain is RNA polymerase II assembly factor rtp1, found in Schizosaccharomyces pombe (strain 972 / ATCC 24843) (Fission yeast).